The primary structure comprises 769 residues: PDZ domain-containing protein 4 (769 aa).

A PDZ domain is found at E130–P214. The interval R221–F315 is disordered. Residues D229 to E239 are compositionally biased toward acidic residues. Residue S236 is modified to Phosphoserine. The span at R282 to L298 shows a compositional bias: basic and acidic residues. Positions V389–A419 form a coiled coil. A disordered region spans residues A445–E579. Positions E447–S467 are enriched in basic and acidic residues. At S454 the chain carries Phosphoserine. Polar residues predominate over residues T468 to S479. Positions L530–R547 are enriched in basic and acidic residues.

In terms of tissue distribution, brain-specific. Expressed in fetal and adult brain. Up-regulated in synovial carcinomas.

The protein resides in the cytoplasm. The protein localises to the cell cortex. In Homo sapiens (Human), this protein is PDZ domain-containing protein 4 (PDZD4).